Reading from the N-terminus, the 397-residue chain is Mannonate dehydratase (397 aa).

Belongs to the mannonate dehydratase family. Requires Fe(2+) as cofactor. It depends on Mn(2+) as a cofactor.

The catalysed reaction is D-mannonate = 2-dehydro-3-deoxy-D-gluconate + H2O. It participates in carbohydrate metabolism; pentose and glucuronate interconversion. Catalyzes the dehydration of D-mannonate. The sequence is that of Mannonate dehydratase from Yersinia pseudotuberculosis serotype O:1b (strain IP 31758).